The following is an 807-amino-acid chain: Glucocorticoid receptor (807 aa).

3 disordered regions span residues 1–47, 246–284, and 412–438; these read MDQG…LPSP, TDVN…QHQQ, and FSVS…SKPS. The tract at residues 1-444 is modulating; it reads MDQGGLKRNC…SKPSGPTHKI (444 aa). A compositionally biased stretch (basic residues) spans 257-282; sequence LQHHQHQQQQHRHLLQHQQHQLHHQH. The segment covering 412-421 has biased composition (low complexity); the sequence is FSVSFSSSSP. 2 consecutive NR C4-type zinc fingers follow at residues 445–465 and 490–514; these read CLVC…CGSC and CAGR…FRKC. The segment at residues 445-519 is a DNA-binding region (nuclear receptor); it reads CLVCSDEASG…RFRKCLQAGM (75 aa). A hinge region spans residues 520–553; the sequence is NLEARKNKKLIKMKVHRPTGSAEPISNMPVPVIP. The NR LBD domain occupies 554–788; the sequence is RMPQLVPTML…FPEMLAEIIT (235 aa).

Belongs to the nuclear hormone receptor family. NR3 subfamily. In terms of assembly, heteromultimeric cytoplasmic complex with HSP90. Upon ligand binding the complex undergoes a conformation change and moves to the nucleus, where it dissociates. Binds to DNA as a homodimer, and as heterodimer with NR3C2. Interaction with numerous other transcription factors modulates transcription activation.

The protein localises to the cytoplasm. Its subcellular location is the nucleus. The protein resides in the mitochondrion. It localises to the cytoskeleton. It is found in the spindle. The protein localises to the microtubule organizing center. Its subcellular location is the centrosome. Its function is as follows. Receptor for glucocorticoids (GC). Has a dual mode of action: as a transcription factor that binds to glucocorticoid response elements (GRE), both for nuclear and mitochondrial DNA, and as a modulator of other transcription factors. Affects inflammatory responses, cellular proliferation and differentiation in target tissues. Involved in chromatin remodeling. Plays a role in rapid mRNA degradation by binding to the 5' UTR of target mRNAs and interacting with PNRC2 in a ligand-dependent manner which recruits the RNA helicase UPF1 and the mRNA-decapping enzyme DCP1A, leading to RNA decay. Could act as a coactivator for STAT5-dependent transcription upon growth hormone (GH) stimulation and could reveal an essential role of hepatic GR in the control of body growth. Mediates glucocorticoid-induced apoptosis. Promotes accurate chromosome segregation during mitosis. May act as a tumor suppressor. May play a negative role in adipogenesis through the regulation of lipolytic and antilipogenic gene expression. The protein is Glucocorticoid receptor (nr3c1) of Paralichthys olivaceus (Bastard halibut).